The primary structure comprises 599 residues: Sulfite reductase [NADPH] flavoprotein alpha-component (599 aa).

Positions 64-202 constitute a Flavodoxin-like domain; it reads VTLISASQTG…AASEWRACVV (139 aa). FMN contacts are provided by residues 70 to 75, 117 to 120, and 153 to 162; these read SQTGNA, STQG, and LGDTSYEFFC. One can recognise an FAD-binding FR-type domain in the interval 234–448; the sequence is DAPLTATLSV…IEHNDNFRLP (215 aa). Residues T322, A356, 386-389, 404-406, Y410, and 419-422 each bind FAD; these read RLYS, TVG, and GGAS. Residues 519 to 520, 525 to 529, and D561 each bind NADP(+); these read SR and KIYVQ. Y599 provides a ligand contact to FAD.

This sequence belongs to the NADPH-dependent sulphite reductase flavoprotein subunit CysJ family. In the N-terminal section; belongs to the flavodoxin family. The protein in the C-terminal section; belongs to the flavoprotein pyridine nucleotide cytochrome reductase family. In terms of assembly, alpha(8)-beta(8). The alpha component is a flavoprotein, the beta component is a hemoprotein. FAD serves as cofactor. Requires FMN as cofactor.

The catalysed reaction is hydrogen sulfide + 3 NADP(+) + 3 H2O = sulfite + 3 NADPH + 4 H(+). Its pathway is sulfur metabolism; hydrogen sulfide biosynthesis; hydrogen sulfide from sulfite (NADPH route): step 1/1. Component of the sulfite reductase complex that catalyzes the 6-electron reduction of sulfite to sulfide. This is one of several activities required for the biosynthesis of L-cysteine from sulfate. The flavoprotein component catalyzes the electron flow from NADPH -&gt; FAD -&gt; FMN to the hemoprotein component. This Salmonella typhi protein is Sulfite reductase [NADPH] flavoprotein alpha-component.